The primary structure comprises 357 residues: Inositol-tetrakisphosphate 1-kinase 3 (357 aa).

Positions 56 and 98 each coordinate 1D-myo-inositol 1,3,4-trisphosphate. 2 residues coordinate ATP: arginine 133 and lysine 183. Histidine 190 and lysine 222 together coordinate 1D-myo-inositol 1,3,4-trisphosphate. Residues 211-222 (QEFVNHGGVLFK), serine 237, and serine 262 each bind ATP. Residues aspartate 302, aspartate 317, and asparagine 319 each coordinate Mg(2+). Asparagine 319 provides a ligand contact to 1D-myo-inositol 1,3,4-trisphosphate.

The protein belongs to the ITPK1 family. In terms of assembly, monomer. Mg(2+) serves as cofactor. In terms of tissue distribution, expressed in roots, leaves, flowers, anthers and embryos.

It carries out the reaction 1D-myo-inositol 3,4,5,6-tetrakisphosphate + ATP = 1D-myo-inositol 1,3,4,5,6-pentakisphosphate + ADP + H(+). The enzyme catalyses 1D-myo-inositol 1,3,4-trisphosphate + ATP = 1D-myo-inositol 1,3,4,5-tetrakisphosphate + ADP + H(+). The catalysed reaction is 1D-myo-inositol 1,3,4-trisphosphate + ATP = 1D-myo-inositol 1,3,4,6-tetrakisphosphate + ADP + H(+). In terms of biological role, kinase that can phosphorylate various inositol polyphosphate such as Ins(3,4,5,6)P4 or Ins(1,3,4)P3 and participates in phytic acid biosynthesis in developing seeds. Phytic acid is the primary storage form of phosphorus in cereal grains and other plant seeds. The polypeptide is Inositol-tetrakisphosphate 1-kinase 3 (Oryza sativa subsp. japonica (Rice)).